An 89-amino-acid polypeptide reads, in one-letter code: Small ribosomal subunit protein uS15 (89 aa).

This sequence belongs to the universal ribosomal protein uS15 family. In terms of assembly, part of the 30S ribosomal subunit. Forms a bridge to the 50S subunit in the 70S ribosome, contacting the 23S rRNA.

Its function is as follows. One of the primary rRNA binding proteins, it binds directly to 16S rRNA where it helps nucleate assembly of the platform of the 30S subunit by binding and bridging several RNA helices of the 16S rRNA. In terms of biological role, forms an intersubunit bridge (bridge B4) with the 23S rRNA of the 50S subunit in the ribosome. The polypeptide is Small ribosomal subunit protein uS15 (Erwinia tasmaniensis (strain DSM 17950 / CFBP 7177 / CIP 109463 / NCPPB 4357 / Et1/99)).